Reading from the N-terminus, the 547-residue chain is Chaperonin GroEL (547 aa).

ATP contacts are provided by residues 30–33, Lys51, 87–91, Gly415, and Asp495; these read TLGP and DGTTT. The tract at residues 525-547 is disordered; the sequence is PDEKEAGGGAPDMGGMGGMGGMM. Residues 531-547 are compositionally biased toward gly residues; sequence GGGAPDMGGMGGMGGMM.

Belongs to the chaperonin (HSP60) family. As to quaternary structure, forms a cylinder of 14 subunits composed of two heptameric rings stacked back-to-back. Interacts with the co-chaperonin GroES.

Its subcellular location is the cytoplasm. It catalyses the reaction ATP + H2O + a folded polypeptide = ADP + phosphate + an unfolded polypeptide.. In terms of biological role, together with its co-chaperonin GroES, plays an essential role in assisting protein folding. The GroEL-GroES system forms a nano-cage that allows encapsulation of the non-native substrate proteins and provides a physical environment optimized to promote and accelerate protein folding. The protein is Chaperonin GroEL of Chromohalobacter salexigens (strain ATCC BAA-138 / DSM 3043 / CIP 106854 / NCIMB 13768 / 1H11).